The following is a 138-amino-acid chain: Small ribosomal subunit protein uS11c (138 aa).

The protein belongs to the universal ribosomal protein uS11 family. In terms of assembly, part of the 30S ribosomal subunit.

The protein localises to the plastid. Its subcellular location is the chloroplast. In Nandina domestica (Heavenly bamboo), this protein is Small ribosomal subunit protein uS11c.